Consider the following 187-residue polypeptide: UPF0340 protein SP70585_0722 (187 aa).

The protein belongs to the UPF0340 family.

The sequence is that of UPF0340 protein SP70585_0722 from Streptococcus pneumoniae (strain 70585).